The chain runs to 365 residues: Flagellar P-ring protein (365 aa).

The first 19 residues, 1–19 (MIKFLSALILLLVTTAAQA), serve as a signal peptide directing secretion.

Belongs to the FlgI family. In terms of assembly, the basal body constitutes a major portion of the flagellar organelle and consists of four rings (L,P,S, and M) mounted on a central rod.

It is found in the periplasm. The protein resides in the bacterial flagellum basal body. Assembles around the rod to form the L-ring and probably protects the motor/basal body from shearing forces during rotation. This is Flagellar P-ring protein from Escherichia coli O9:H4 (strain HS).